The chain runs to 189 residues: Elongation factor P (189 aa).

Belongs to the elongation factor P family.

It is found in the cytoplasm. The protein operates within protein biosynthesis; polypeptide chain elongation. Functionally, involved in peptide bond synthesis. Stimulates efficient translation and peptide-bond synthesis on native or reconstituted 70S ribosomes in vitro. Probably functions indirectly by altering the affinity of the ribosome for aminoacyl-tRNA, thus increasing their reactivity as acceptors for peptidyl transferase. This chain is Elongation factor P, found in Pseudomonas entomophila (strain L48).